Consider the following 341-residue polypeptide: DNA-directed RNA polymerase subunit alpha (341 aa).

The interval 1–233 is alpha N-terminal domain (alpha-NTD); sequence MLKDGTSVSN…DLLSPFLHTK (233 aa). Residues 262–341 form an alpha C-terminal domain (alpha-CTD) region; sequence SEGDFFKNTF…NEKPRVVGDE (80 aa).

The protein belongs to the RNA polymerase alpha chain family. In plastids the minimal PEP RNA polymerase catalytic core is composed of four subunits: alpha, beta, beta', and beta''. When a (nuclear-encoded) sigma factor is associated with the core the holoenzyme is formed, which can initiate transcription.

It is found in the plastid. It localises to the chloroplast. It catalyses the reaction RNA(n) + a ribonucleoside 5'-triphosphate = RNA(n+1) + diphosphate. Functionally, DNA-dependent RNA polymerase catalyzes the transcription of DNA into RNA using the four ribonucleoside triphosphates as substrates. The polypeptide is DNA-directed RNA polymerase subunit alpha (Marsilea quadrifolia (European water clover)).